A 447-amino-acid polypeptide reads, in one-letter code: Signal recognition particle 54 kDa protein (447 aa).

GTP is bound by residues 103-110 (GVQGSGKT), 185-189 (DTAGR), and 245-248 (TKMD).

The protein belongs to the GTP-binding SRP family. SRP54 subfamily. In terms of assembly, part of the signal recognition particle protein translocation system, which is composed of SRP and FtsY. Archaeal SRP consists of a 7S RNA molecule of 300 nucleotides and two protein subunits: SRP54 and SRP19.

It localises to the cytoplasm. The catalysed reaction is GTP + H2O = GDP + phosphate + H(+). In terms of biological role, involved in targeting and insertion of nascent membrane proteins into the cytoplasmic membrane. Binds to the hydrophobic signal sequence of the ribosome-nascent chain (RNC) as it emerges from the ribosomes. The SRP-RNC complex is then targeted to the cytoplasmic membrane where it interacts with the SRP receptor FtsY. This is Signal recognition particle 54 kDa protein from Saccharolobus islandicus (strain M.16.27) (Sulfolobus islandicus).